Here is a 483-residue protein sequence, read N- to C-terminus: (R)-mandelonitrile beta-glucosyltransferase (483 aa).

H22 (proton acceptor) is an active-site residue. An anthocyanidin is bound at residue H22. Residue D124 is the Charge relay of the active site. Residues T146, Q363, H378, W381, N382, S383, and E386 each coordinate UDP-alpha-D-glucose. A401 is a binding site for an anthocyanidin. UDP-alpha-D-glucose-binding residues include E402 and Q403.

It belongs to the UDP-glycosyltransferase family.

It catalyses the reaction (R)-mandelonitrile + UDP-alpha-D-glucose = (R)-prunasin + UDP + H(+). Involved in the biosynthesis of the cyanogenic glycoside (R)-prunasin, a precursor of (R)-amygdalin, which at high concentrations is associated with intense bitterness in kernels of almond. Stereo-selectively glucosylates (R)-mandelonitrile to produce (R)-prunasin. This Prunus dulcis (Almond) protein is (R)-mandelonitrile beta-glucosyltransferase.